Here is a 181-residue protein sequence, read N- to C-terminus: Mitochondrial inner membrane protein Mpv17 (181 aa).

The next 4 membrane-spanning stretches (helical) occupy residues V20–T38, T48–L70, F91–F113, and L140–W162.

It belongs to the peroxisomal membrane protein PXMP2/4 family.

It is found in the mitochondrion inner membrane. In terms of biological role, involved in mitochondria homeostasis. The protein is Mitochondrial inner membrane protein Mpv17 of Caenorhabditis briggsae.